The primary structure comprises 643 residues: Alpha-dioxygenase 1 (643 aa).

His-167 (proton acceptor) is an active-site residue. Asp-168 contributes to the Ca(2+) binding site. His-172 serves as a coordination point for heme b. The Ca(2+) site is built by Thr-220, Trp-222, Asp-224, and Ser-226. Heme b is bound by residues His-392, Arg-489, and Arg-493.

The protein belongs to the peroxidase family. Requires heme b as cofactor. Ca(2+) serves as cofactor.

In terms of biological role, alpha-dioxygenase that catalyzes the primary oxygenation step of a variety of 14-20 carbon fatty acids, containing up to three unsaturated bonds, into their corresponding 2R-hydroperoxides. Involved in the production of oxylipins that function in cell signaling, wound healing, and protection from infection. The lipid-derived signaling pathway is involved in the initial response of hot pepper plants to pathogen infection. This chain is Alpha-dioxygenase 1, found in Capsicum annuum (Capsicum pepper).